The chain runs to 261 residues: tRNA pseudouridine synthase A (261 aa).

Catalysis depends on Asp51, which acts as the Nucleophile. Tyr109 lines the substrate pocket.

This sequence belongs to the tRNA pseudouridine synthase TruA family. Homodimer.

It carries out the reaction uridine(38/39/40) in tRNA = pseudouridine(38/39/40) in tRNA. In terms of biological role, formation of pseudouridine at positions 38, 39 and 40 in the anticodon stem and loop of transfer RNAs. The polypeptide is tRNA pseudouridine synthase A (Shewanella piezotolerans (strain WP3 / JCM 13877)).